We begin with the raw amino-acid sequence, 339 residues long: Probable cytosolic iron-sulfur protein assembly protein CIAO1 (339 aa).

WD repeat units lie at residues 14 to 53, 59 to 98, 103 to 142, 148 to 187, 192 to 231, 250 to 289, and 301 to 339; these read HPDSRCWFLAWNPTGTLLASCGGDRKIRIWGTEGDSWICK, GHQRTVRKVAWSPCGNYLASASFDATTCIWKKNQDDFECV, GHENEVKSVAWAPSGNLLATCSRDKSVWVWEVDEEDEYEC, SHTQDVKHVVWHPSQELLASASYDDTVKLYQEEGDDWVCC, GHESTVWSIAFDPSGQRLASCSDDRTVRIWRQYLPGNEQG, FHTRTIYDVAWCQLTGALATACGDDAIRVFEEDPGSDPQQ, and AHSQDVNCVAWNPKEAGLLASCSDDGEVAFWEYHQPAGL. The LYR motif; required for interaction with HSC20 motif lies at 176–178; sequence LYQ.

This sequence belongs to the WD repeat CIA1 family. Component of the CIA complex. Interacts with CIAO2A and forms a complex with CIAO2B and MMS19; the interactions with CIAO2A and CIAO2B are mutually exclusive. Interacts with CHD1L, ERCC2, IREB2 and POLD1. Component of the MMXD complex, which includes CIAO1, ERCC2, CIAO2B, MMS19 and SLC25A5. Interacts with WT1. Interacts with CIAO3. Interacts (via LYR motif) with HSC20.

It localises to the cytoplasm. Functionally, key component of the cytosolic iron-sulfur protein assembly (CIA) complex, a multiprotein complex that mediates the incorporation of iron-sulfur cluster into extramitochondrial Fe/S proteins. As a CIA complex component, interacts specifically with CIAO2A or CIAO2B and MMS19 to assist different branches of iron-sulfur protein assembly, depending of its interactors. The complex CIAO1:CIAO2B:MMS19 binds to and facilitates the assembly of most cytosolic-nuclear Fe/S proteins. CIAO1:CIAO2A specifically matures ACO1 and stabilizes IREB2. Seems to specifically modulate the transactivation activity of WT1. As part of the mitotic spindle-associated MMXD complex it may play a role in chromosome segregation. The sequence is that of Probable cytosolic iron-sulfur protein assembly protein CIAO1 from Rattus norvegicus (Rat).